The chain runs to 208 residues: Guanylate kinase (208 aa).

One can recognise a Guanylate kinase-like domain in the interval 4 to 184 (GTLYIVSAPS…ALMDFKAIIR (181 aa)). 11–18 (APSGAGKS) lines the ATP pocket.

This sequence belongs to the guanylate kinase family.

Its subcellular location is the cytoplasm. It carries out the reaction GMP + ATP = GDP + ADP. Functionally, essential for recycling GMP and indirectly, cGMP. The chain is Guanylate kinase from Photobacterium profundum (strain SS9).